Reading from the N-terminus, the 118-residue chain is Basic phospholipase A2 PA-9C (118 aa).

Cystine bridges form between Cys11-Cys71, Cys27-Cys117, Cys29-Cys45, Cys44-Cys98, Cys51-Cys91, Cys60-Cys84, and Cys78-Cys89. Positions 28, 30, and 32 each coordinate Ca(2+). His48 is a catalytic residue. Asp49 is a binding site for Ca(2+). Asp92 is an active-site residue.

This sequence belongs to the phospholipase A2 family. Group I subfamily. D49 sub-subfamily. The cofactor is Ca(2+). Expressed by the venom gland.

The protein resides in the secreted. It catalyses the reaction a 1,2-diacyl-sn-glycero-3-phosphocholine + H2O = a 1-acyl-sn-glycero-3-phosphocholine + a fatty acid + H(+). In terms of biological role, PLA2 catalyzes the calcium-dependent hydrolysis of the 2-acyl groups in 3-sn-phosphoglycerides. This chain is Basic phospholipase A2 PA-9C, found in Pseudechis australis (Mulga snake).